The sequence spans 485 residues: 3-isopropylmalate dehydratase large subunit (485 aa).

Disordered regions lie at residues 1 to 20 (MSDASSTAPSQAGATSQSTG) and 73 to 92 (PERTIATPDHNVPTSDRSLP). [4Fe-4S] cluster-binding residues include Cys-364, Cys-424, and Cys-427.

It belongs to the aconitase/IPM isomerase family. LeuC type 1 subfamily. As to quaternary structure, heterodimer of LeuC and LeuD. [4Fe-4S] cluster is required as a cofactor.

The catalysed reaction is (2R,3S)-3-isopropylmalate = (2S)-2-isopropylmalate. It participates in amino-acid biosynthesis; L-leucine biosynthesis; L-leucine from 3-methyl-2-oxobutanoate: step 2/4. Its function is as follows. Catalyzes the isomerization between 2-isopropylmalate and 3-isopropylmalate, via the formation of 2-isopropylmaleate. The protein is 3-isopropylmalate dehydratase large subunit of Rhodopirellula baltica (strain DSM 10527 / NCIMB 13988 / SH1).